We begin with the raw amino-acid sequence, 200 residues long: MKVAIVEYGVGNLNSVYRAVKHLGHEPVVTDDPSELHDADAVILPGVGNFRAAAEKLEETGLCDEIRELLGSVPLLGICLGMQLLMESSEESPESRGLGVFRGTCVALPNDVKTPHMGWNTVEFRTEEFREFDGEMFYFVHSYRVAPEDDVVLGETEYGERFPSVIGDRGRLIYGMQFHPEKSGPVGLKLLGEVLTGASR.

A Glutamine amidotransferase type-1 domain is found at 2-200 (KVAIVEYGVG…LGEVLTGASR (199 aa)). The active-site Nucleophile is the cysteine 79. Catalysis depends on residues histidine 179 and glutamate 181.

In terms of assembly, heterodimer of HisH and HisF.

It localises to the cytoplasm. The enzyme catalyses 5-[(5-phospho-1-deoxy-D-ribulos-1-ylimino)methylamino]-1-(5-phospho-beta-D-ribosyl)imidazole-4-carboxamide + L-glutamine = D-erythro-1-(imidazol-4-yl)glycerol 3-phosphate + 5-amino-1-(5-phospho-beta-D-ribosyl)imidazole-4-carboxamide + L-glutamate + H(+). It catalyses the reaction L-glutamine + H2O = L-glutamate + NH4(+). Its pathway is amino-acid biosynthesis; L-histidine biosynthesis; L-histidine from 5-phospho-alpha-D-ribose 1-diphosphate: step 5/9. Functionally, IGPS catalyzes the conversion of PRFAR and glutamine to IGP, AICAR and glutamate. The HisH subunit catalyzes the hydrolysis of glutamine to glutamate and ammonia as part of the synthesis of IGP and AICAR. The resulting ammonia molecule is channeled to the active site of HisF. The chain is Imidazole glycerol phosphate synthase subunit HisH from Methanopyrus kandleri (strain AV19 / DSM 6324 / JCM 9639 / NBRC 100938).